The primary structure comprises 20 residues: Hemocyanin subunit 6 (20 aa).

This sequence belongs to the tyrosinase family. Hemocyanin subfamily. Hemolymph.

The protein localises to the secreted. It localises to the extracellular space. Its function is as follows. Hemocyanins are copper-containing oxygen carriers occurring freely dissolved in the hemolymph of many mollusks and arthropods. In Homarus americanus (American lobster), this protein is Hemocyanin subunit 6.